The chain runs to 214 residues: Adenylate kinase (214 aa).

10-15 (GAGKGT) contacts ATP. An NMP region spans residues 30–59 (STGDMFRAALKNQTPLGLKAKEYMDKGELV). AMP contacts are provided by residues Thr-31, Arg-36, 57–59 (ELV), 85–88 (GFPR), and Gln-92. Residues 126–163 (GRRVCRQCGATYHVKFNPPKVEGVCDACGGELYQRSDD) are LID. Arg-127 is a binding site for ATP. Cys-130 and Cys-133 together coordinate Zn(2+). Position 136-137 (136-137 (TY)) interacts with ATP. Residues Cys-150 and Cys-153 each coordinate Zn(2+). Arg-160 and Arg-171 together coordinate AMP. Position 199 (Lys-199) interacts with ATP.

Belongs to the adenylate kinase family. As to quaternary structure, monomer.

Its subcellular location is the cytoplasm. The enzyme catalyses AMP + ATP = 2 ADP. Its pathway is purine metabolism; AMP biosynthesis via salvage pathway; AMP from ADP: step 1/1. Its function is as follows. Catalyzes the reversible transfer of the terminal phosphate group between ATP and AMP. Plays an important role in cellular energy homeostasis and in adenine nucleotide metabolism. The polypeptide is Adenylate kinase (Carboxydothermus hydrogenoformans (strain ATCC BAA-161 / DSM 6008 / Z-2901)).